We begin with the raw amino-acid sequence, 576 residues long: DM7 family protein GD16138 (576 aa).

Residues 454–481 are disordered; the sequence is FPELEPDSEPEPEPEPQTEDEGEDEGDK. Acidic residues predominate over residues 457–478; that stretch reads LEPDSEPEPEPEPQTEDEGEDE.

Belongs to the DM7 family.

The protein is DM7 family protein GD16138 of Drosophila simulans (Fruit fly).